Reading from the N-terminus, the 65-residue chain is Large ribosomal subunit protein bL35 (65 aa).

A disordered region spans residues 1–25; the sequence is MPKMKSHRGAAKRFKKTGTGKLKRA.

This sequence belongs to the bacterial ribosomal protein bL35 family.

The sequence is that of Large ribosomal subunit protein bL35 from Clostridium botulinum (strain Alaska E43 / Type E3).